The chain runs to 221 residues: Early nodulin-like protein 4 (221 aa).

Residues 1–21 form the signal peptide; sequence MVFVKMTDVYLMIVMLMGLGF. Positions 29–130 constitute a Phytocyanin domain; sequence HKFYVGGRDG…GQKLAVTVMS (102 aa). 2 N-linked (GlcNAc...) asparagine glycosylation sites follow: asparagine 59 and asparagine 85. The cysteines at positions 84 and 118 are disulfide-linked. The disordered stretch occupies residues 130 to 185; it reads STGHHSHTPRHPSPSPSPSASPVRKALLSPAPIPVHKALSSPAPTPGVDPSHSEVL. A lipid anchor (GPI-anchor amidated asparagine) is attached at asparagine 197. Residues 198–221 constitute a propeptide, removed in mature form; it reads LAGSVAPGVISLGLVLVIMISSMV.

Belongs to the early nodulin-like (ENODL) family. As to expression, confined to flowers.

The protein resides in the cell membrane. In terms of biological role, may act as a carbohydrate transporter. The chain is Early nodulin-like protein 4 from Arabidopsis thaliana (Mouse-ear cress).